Consider the following 268-residue polypeptide: Interleukin-2 receptor subunit alpha (268 aa).

The signal sequence occupies residues 1 to 21; the sequence is MEPRLLMLGFLSLTIVPSCRA. The 58-residue stretch at 22–79 folds into the Sushi 1 domain; sequence ELCLYDPPEVPNATFKALSYKNGTILNCECKRGFRRLKELVYMRCLGNSWSSNCQCTS. Topologically, residues 22–236 are extracellular; that stretch reads ELCLYDPPEV…ETFVLTMEYK (215 aa). 3 disulfides stabilise this stretch: cysteine 24–cysteine 66, cysteine 49–cysteine 75, and cysteine 51–cysteine 77. N-linked (GlcNAc...) asparagine glycans are attached at residues asparagine 33 and asparagine 43. Residues 86-109 form a disordered region; it reads RKQVTAQLEHQKEQQTTTDMQKPT. Over residues 88 to 109 the composition is skewed to polar residues; that stretch reads QVTAQLEHQKEQQTTTDMQKPT. N-linked (GlcNAc...) asparagine glycosylation occurs at asparagine 116. The Sushi 2 domain occupies 119–182; it reads GHCREPPPWK…WTQPQLTCVD (64 aa). Disulfide bonds link cysteine 121–cysteine 164 and cysteine 148–cysteine 180. A disordered region spans residues 189–219; it reads FLASEESQGSRNSSPESETSCPITTTDFPQP. Over residues 193-211 the composition is skewed to polar residues; it reads EESQGSRNSSPESETSCPI. The helical transmembrane segment at 237 to 257 threads the bilayer; it reads VAVASCLFLLISILLLSGLTW. The Cytoplasmic segment spans residues 258–268; the sequence is QHRWRKSRRTI.

Non-covalent dimer of an alpha and a beta subunit. IL2R exists in 3 different forms: a high affinity dimer, an intermediate affinity monomer (beta subunit), and a low affinity monomer (alpha subunit). The high and intermediate affinity forms also associate with a gamma subunit.

The protein resides in the membrane. In terms of biological role, receptor for interleukin-2. The receptor is involved in the regulation of immune tolerance by controlling regulatory T cells (TREGs) activity. TREGs suppress the activation and expansion of autoreactive T-cells. This Mus musculus (Mouse) protein is Interleukin-2 receptor subunit alpha (Il2ra).